A 65-amino-acid polypeptide reads, in one-letter code: MSEVKFVKPKNVSGHFLKIKCKDCGNVQVVFARPSSVVTCNICGATIAKPTGGVLETSGEVIESL.

Residues Cys21, Cys24, Cys40, and Cys43 each coordinate Zn(2+). The C4-type zinc finger occupies 21–43; sequence CKDCGNVQVVFARPSSVVTCNIC.

It belongs to the eukaryotic ribosomal protein eS27 family. Part of the 30S ribosomal subunit. Zn(2+) serves as cofactor.

The chain is Small ribosomal subunit protein eS27 from Thermoplasma volcanium (strain ATCC 51530 / DSM 4299 / JCM 9571 / NBRC 15438 / GSS1).